Here is a 195-residue protein sequence, read N- to C-terminus: Probable GTP-binding protein EngB (195 aa).

One can recognise an EngB-type G domain in the interval 24–195 (DIPEIALAGR…AAWDAILSKI (172 aa)). Residues 32-39 (GRSNVGKS), 59-63 (GKTQL), 77-80 (DVPG), 144-147 (TKAD), and 176-178 (FSS) contribute to the GTP site. 2 residues coordinate Mg(2+): Ser39 and Thr61.

This sequence belongs to the TRAFAC class TrmE-Era-EngA-EngB-Septin-like GTPase superfamily. EngB GTPase family. It depends on Mg(2+) as a cofactor.

Functionally, necessary for normal cell division and for the maintenance of normal septation. The polypeptide is Probable GTP-binding protein EngB (Streptococcus sanguinis (strain SK36)).